Reading from the N-terminus, the 290-residue chain is Protein 3 (290 aa).

This is Protein 3 from Lettuce big-vein associated virus (isolate Japan/Kagawa) (LBVaV).